Consider the following 788-residue polypeptide: Choline transporter-like protein 1 (788 aa).

The helical transmembrane segment at phenylalanine 98–glycine 118 threads the bilayer. The N-linked (GlcNAc...) asparagine glycan is linked to asparagine 276. 4 helical membrane passes run tryptophan 329–isoleucine 349, leucine 352–glycine 372, phenylalanine 409–isoleucine 429, and leucine 458–leucine 478. Asparagine 497 is a glycosylation site (N-linked (GlcNAc...) asparagine). 5 consecutive transmembrane segments (helical) span residues leucine 531–glycine 551, leucine 583–leucine 603, tryptophan 620–threonine 640, alanine 679–phenylalanine 699, and tyrosine 718–phenylalanine 738.

It belongs to the CTL (choline transporter-like) family.

It is found in the membrane. The protein is Choline transporter-like protein 1 (chtl-1) of Caenorhabditis briggsae.